We begin with the raw amino-acid sequence, 257 residues long: NAD-capped RNA hydrolase NudC (257 aa).

Arginine 69 lines the substrate pocket. The Zn(2+) site is built by cysteine 98 and cysteine 101. Glutamate 111 is a binding site for substrate. Zn(2+) is bound by residues cysteine 116 and cysteine 119. Tyrosine 124 is a binding site for substrate. Residues 125–248 (PQIAPCIIVA…TVARRLIEDT (124 aa)) enclose the Nudix hydrolase domain. The a divalent metal cation site is built by alanine 158, glutamate 174, and glutamate 178. Residues 159 to 180 (GFVEVGETLEQAVAREVMEESG) carry the Nudix box motif. A substrate-binding site is contributed by 192–199 (QPWPFPQS). Glutamate 219 lines the a divalent metal cation pocket. Substrate is bound at residue alanine 241.

The protein belongs to the Nudix hydrolase family. NudC subfamily. As to quaternary structure, homodimer. Requires Mg(2+) as cofactor. Mn(2+) is required as a cofactor. The cofactor is Zn(2+).

It carries out the reaction a 5'-end NAD(+)-phospho-ribonucleoside in mRNA + H2O = a 5'-end phospho-adenosine-phospho-ribonucleoside in mRNA + beta-nicotinamide D-ribonucleotide + 2 H(+). It catalyses the reaction NAD(+) + H2O = beta-nicotinamide D-ribonucleotide + AMP + 2 H(+). The enzyme catalyses NADH + H2O = reduced beta-nicotinamide D-ribonucleotide + AMP + 2 H(+). In terms of biological role, mRNA decapping enzyme that specifically removes the nicotinamide adenine dinucleotide (NAD) cap from a subset of mRNAs by hydrolyzing the diphosphate linkage to produce nicotinamide mononucleotide (NMN) and 5' monophosphate mRNA. The NAD-cap is present at the 5'-end of some mRNAs and stabilizes RNA against 5'-processing. Has preference for mRNAs with a 5'-end purine. Catalyzes the hydrolysis of a broad range of dinucleotide pyrophosphates. This is NAD-capped RNA hydrolase NudC from Salmonella typhimurium (strain LT2 / SGSC1412 / ATCC 700720).